Here is a 114-residue protein sequence, read N- to C-terminus: Acetyltransferase At1g77540 (114 aa).

T2 carries the post-translational modification N-acetylthreonine. Residues 18–106 form the N-acetyltransferase domain; sequence KIVWNEGKRR…RNPSWKPLIH (89 aa). Residues 52 to 55 and 61 to 66 each bind CoA; these read HTYV and GLGLAS. C87 serves as the catalytic Nucleophile. CoA-binding positions include 88-89, T93, and R97; that span reads SY.

It is found in the peroxisome. Possesses in vitro histone acetyltransferase activity with histones H3 and H4. This is Acetyltransferase At1g77540 from Arabidopsis thaliana (Mouse-ear cress).